Here is a 1290-residue protein sequence, read N- to C-terminus: DNA-directed RNA polymerase subunit beta' (1290 aa).

Positions 68, 70, 83, and 86 each coordinate Zn(2+). The Mg(2+) site is built by Asp-530, Asp-532, and Asp-534. Positions 909, 985, 992, and 995 each coordinate Zn(2+).

The protein belongs to the RNA polymerase beta' chain family. As to quaternary structure, the RNAP catalytic core consists of 2 alpha, 1 beta, 1 beta' and 1 omega subunit. When a sigma factor is associated with the core the holoenzyme is formed, which can initiate transcription. Requires Mg(2+) as cofactor. Zn(2+) serves as cofactor.

It catalyses the reaction RNA(n) + a ribonucleoside 5'-triphosphate = RNA(n+1) + diphosphate. Functionally, DNA-dependent RNA polymerase catalyzes the transcription of DNA into RNA using the four ribonucleoside triphosphates as substrates. This is DNA-directed RNA polymerase subunit beta' from Mycoplasma pneumoniae (strain ATCC 29342 / M129 / Subtype 1) (Mycoplasmoides pneumoniae).